The sequence spans 510 residues: Maturase K (510 aa).

The protein belongs to the intron maturase 2 family. MatK subfamily.

The protein resides in the plastid. It localises to the chloroplast. In terms of biological role, usually encoded in the trnK tRNA gene intron. Probably assists in splicing its own and other chloroplast group II introns. This is Maturase K from Spirodela intermedia (Intermediate duckweed).